We begin with the raw amino-acid sequence, 327 residues long: GMP reductase (327 aa).

Cysteine 176 functions as the Thioimidate intermediate in the catalytic mechanism. 205 to 228 serves as a coordination point for NADP(+); sequence IIADGGIRTHGDIAKSIRFGASMV.

It belongs to the IMPDH/GMPR family. GuaC type 2 subfamily.

The catalysed reaction is IMP + NH4(+) + NADP(+) = GMP + NADPH + 2 H(+). Catalyzes the irreversible NADPH-dependent deamination of GMP to IMP. It functions in the conversion of nucleobase, nucleoside and nucleotide derivatives of G to A nucleotides, and in maintaining the intracellular balance of A and G nucleotides. The chain is GMP reductase from Streptococcus gordonii (strain Challis / ATCC 35105 / BCRC 15272 / CH1 / DL1 / V288).